The primary structure comprises 296 residues: Probable alpha-L-glutamate ligase (296 aa).

Residues 104 to 287 (LQLLARQGID…IATLMITFIE (184 aa)) enclose the ATP-grasp domain. Residues K141, 178–179 (EF), D187, and 211–213 (RSN) contribute to the ATP site. Mg(2+) contacts are provided by D248, E260, and N262. Mn(2+)-binding residues include D248, E260, and N262.

This sequence belongs to the RimK family. Mg(2+) serves as cofactor. Requires Mn(2+) as cofactor.

This chain is Probable alpha-L-glutamate ligase, found in Sodalis glossinidius (strain morsitans).